Consider the following 396-residue polypeptide: Adenosine deaminase 1 (396 aa).

A disordered region spans residues 1–26 (MTSRSTEKSAAANPAAVSKTPSPDRI). The Zn(2+) site is built by histidine 35 and histidine 37. Substrate is bound by residues histidine 37, aspartate 39, and glycine 197. Histidine 224 contacts Zn(2+). Glutamate 227 serves as the catalytic Proton donor. Aspartate 316 serves as a coordination point for Zn(2+).

This sequence belongs to the metallo-dependent hydrolases superfamily. Adenosine and AMP deaminases family. Adenosine deaminase subfamily. Homotetramer. The cofactor is Zn(2+).

The catalysed reaction is adenosine + H2O + H(+) = inosine + NH4(+). It catalyses the reaction 2'-deoxyadenosine + H2O + H(+) = 2'-deoxyinosine + NH4(+). Its activity is regulated as follows. Coformycin and 2'-deoxycoformycin, whose structures mimic the transition state of the deamination reaction, are potent competitive inhibitors. Its function is as follows. Catalyzes the hydrolytic deamination of adenosine and 2-deoxyadenosine. This chain is Adenosine deaminase 1, found in Streptomyces coelicolor (strain ATCC BAA-471 / A3(2) / M145).